Consider the following 137-residue polypeptide: MDVRQFLSDCEAPEEMVALRAAADAVGVDNRACAHLYTMLWEGVNLEEVHASLLGDGVVNWGRVAAFMHICRYIVRTFPSSMDRTEVALTKFIQDPKIDKQLREWTDRLGTVGLIGRCLEWLGAGVITGVVLSLLFY.

This is an uncharacterized protein from Frog virus 3 (isolate Goorha) (FV-3).